The primary structure comprises 140 residues: Transcription antitermination protein NusB (140 aa).

The protein belongs to the NusB family.

Its function is as follows. Involved in transcription antitermination. Required for transcription of ribosomal RNA (rRNA) genes. Binds specifically to the boxA antiterminator sequence of the ribosomal RNA (rrn) operons. The polypeptide is Transcription antitermination protein NusB (Thermoanaerobacter pseudethanolicus (strain ATCC 33223 / 39E) (Clostridium thermohydrosulfuricum)).